The sequence spans 245 residues: MSTNPKPAFRRILLKLSGEALMGDEGFGIDPKVLDRMAQEVKELVELGIQVGVVIGGGNLFRGEGLAKAGMNRVVGDHMGMLATVMNGLAMRDALHRAYVNARLMSAIPLKGVCDDYNWAEAISLLKSGRVVIFAAGTGNPFCTTDSAACLRGIEIEAEVVLKGTKVDGVYSEDPMKNPDAVKYDEVTYAEILEKELKVMDLAAFTMARDHDMPILVFNMNKPGALRRVIMGEEEGTLIRAKKVI.

Residue 15-18 (KLSG) coordinates ATP. The interval 23-28 (GDEGFG) is involved in allosteric activation by GTP. Glycine 57 provides a ligand contact to UMP. ATP contacts are provided by glycine 58 and arginine 62. UMP is bound by residues aspartate 77 and 138-145 (TGNPFCTT). The ATP site is built by threonine 165, tyrosine 171, and aspartate 174.

This sequence belongs to the UMP kinase family. Homohexamer.

It localises to the cytoplasm. The catalysed reaction is UMP + ATP = UDP + ADP. The protein operates within pyrimidine metabolism; CTP biosynthesis via de novo pathway; UDP from UMP (UMPK route): step 1/1. Its activity is regulated as follows. Allosterically activated by GTP. Inhibited by UTP. Functionally, catalyzes the reversible phosphorylation of UMP to UDP. This chain is Uridylate kinase, found in Shewanella baltica (strain OS155 / ATCC BAA-1091).